We begin with the raw amino-acid sequence, 482 residues long: uncharacterized protein (482 aa).

Composition is skewed to low complexity over residues 24 to 86 (SPNS…AQQQ) and 312 to 339 (TDSLCSSSTSTPSFNSTSSSSKNQSQSI). Disordered regions lie at residues 24–88 (SPNS…QQHY) and 307–376 (LHSQ…LIGK). A compositionally biased stretch (acidic residues) spans 342 to 363 (EEEEDGGEDEEEEGGEDNDNES).

This is an uncharacterized protein from Dictyostelium discoideum (Social amoeba).